The sequence spans 411 residues: Carbohydrate sulfotransferase 1 (411 aa).

Residue M1 is a topological domain, cytoplasmic. The helical; Signal-anchor for type II membrane protein transmembrane segment at 2-23 (QCSWKAVLLLALASIAIQYTAI) threads the bilayer. At 24-411 (RTFTAKSFHT…VEERDFRPFL (388 aa)) the chain is on the lumenal side. N56 carries N-linked (GlcNAc...) asparagine glycosylation. Residue 69–75 (TRSGSSF) participates in 3'-phosphoadenylyl sulfate binding. N145 and N189 each carry an N-linked (GlcNAc...) asparagine glycan. 3'-phosphoadenylyl sulfate is bound at residue 234-242 (RDPRGILAS). N334 carries N-linked (GlcNAc...) asparagine glycosylation. The Cell attachment site motif lies at 337-339 (RGD).

Belongs to the sulfotransferase 1 family. Gal/GlcNAc/GalNAc subfamily.

The protein resides in the golgi apparatus membrane. It carries out the reaction 3'-phosphoadenylyl sulfate + keratan = adenosine 3',5'-bisphosphate + keratan 6'-sulfate.. It participates in glycan metabolism. In terms of biological role, sulfotransferase that utilizes 3'-phospho-5'-adenylyl sulfate (PAPS) as sulfonate donor to catalyze the transfer of sulfate to position 6 of internal galactose (Gal) residues of keratan. Cooperates with B4GALT4 and B3GNT7 glycosyltransferases and CHST6 sulfotransferase to construct and elongate disulfated disaccharide unit [-&gt;3(6-sulfoGalbeta)1-&gt;4(6-sulfoGlcNAcbeta)1-&gt;] within keratan sulfate polymer. Has a preference for sulfating keratan sulfate, but it also transfers sulfate to the unsulfated polymer. Involved in biosynthesis of phosphacan, a major keratan sulfate proteoglycan in the developing brain. Involved in biosynthesis of 6-sulfoGalbeta-containing O-linked glycans in high endothelial venules of lymph nodes. May act in a synergistic manner with CHST4 to generate sialyl 6',6-disulfo Lewis X motif, a recognition determinant for immune cell receptors implicated in leukocyte trafficking. Catalyzes sulfation of N-acetyllactosamine (LacNAc) oligosaccharides with highest efficiency for sialylated LacNAc structures. This Rattus norvegicus (Rat) protein is Carbohydrate sulfotransferase 1 (Chst1).